The chain runs to 387 residues: Tetratricopeptide repeat protein 4 (387 aa).

Methionine 1 bears the N-acetylmethionine mark. A phosphoserine mark is found at serine 47 and serine 51. TPR repeat units lie at residues 79 to 112 (AKTYKDEGNDYFKEKDYKKAVISYTEGLKKKCAD), 117 to 150 (AVLYTNRAAAQYYLGNFRSALNDVTAARKLKPCH), and 151 to 184 (LKAIIRGALCHLELKHFAEAVNWCDEGLQIDAKE). Position 243 is a phosphoserine (serine 243).

Belongs to the TTC4 family. In terms of assembly, interacts (via TPR repeats) with HSP90AB1. Interacts with HSPA8 and CDC6. Interacts with TBK1. Interacts with MSL1. Highly expressed in proliferating tissue and tumor cell lines but not in normal cell lines.

The protein resides in the nucleus. It is found in the nucleoplasm. Its subcellular location is the cytoplasm. May act as a co-chaperone for HSP90AB1. Promotes Sendai virus (SeV)-induced host cell innate immune responses. In Homo sapiens (Human), this protein is Tetratricopeptide repeat protein 4 (TTC4).